We begin with the raw amino-acid sequence, 638 residues long: Chaperone protein DnaK (638 aa).

A Phosphothreonine; by autocatalysis modification is found at T199. Positions Y603–A618 are enriched in low complexity. The segment at Y603 to K638 is disordered. The span at A621–K638 shows a compositional bias: acidic residues.

The protein belongs to the heat shock protein 70 family.

In terms of biological role, acts as a chaperone. In Hydrogenovibrio crunogenus (strain DSM 25203 / XCL-2) (Thiomicrospira crunogena), this protein is Chaperone protein DnaK.